A 182-amino-acid polypeptide reads, in one-letter code: UPF0316 protein lp_1140 (182 aa).

The next 3 helical transmembrane spans lie at 1–21 (MHID…YITL), 36–56 (FAAF…SLVL), and 62–82 (PINL…GMVI).

It belongs to the UPF0316 family.

Its subcellular location is the cell membrane. This chain is UPF0316 protein lp_1140, found in Lactiplantibacillus plantarum (strain ATCC BAA-793 / NCIMB 8826 / WCFS1) (Lactobacillus plantarum).